A 90-amino-acid chain; its full sequence is Inactive casein kinase II subunit alpha-2 (90 aa).

ATP-binding positions include 40–48 (VGRGKYSEV) and K63.

The protein belongs to the protein kinase superfamily. Ser/Thr protein kinase family. CK2 subfamily.

Functionally, the Nipponbare allele of HD6 contains a premature stop codon, resulting in a truncated non-functional product. The polypeptide is Inactive casein kinase II subunit alpha-2 (Oryza sativa subsp. japonica (Rice)).